A 540-amino-acid polypeptide reads, in one-letter code: Membrane protein insertase YidC (540 aa).

Transmembrane regions (helical) follow at residues 1 to 21 (MVVQ…MMLD), 351 to 371 (NWGI…FPLT), 418 to 438 (LGGC…YYML), 464 to 484 (ILPI…PSSI), and 497 to 517 (PLIF…YYII).

Belongs to the OXA1/ALB3/YidC family. Type 1 subfamily. In terms of assembly, interacts with the Sec translocase complex via SecD. Specifically interacts with transmembrane segments of nascent integral membrane proteins during membrane integration.

It localises to the cell membrane. Its function is as follows. Required for the insertion and/or proper folding and/or complex formation of integral membrane proteins into the membrane. Involved in integration of membrane proteins that insert both dependently and independently of the Sec translocase complex, as well as at least some lipoproteins. Aids folding of multispanning membrane proteins. This Wigglesworthia glossinidia brevipalpis protein is Membrane protein insertase YidC.